A 156-amino-acid polypeptide reads, in one-letter code: tRNA (cytidine(34)-2'-O)-methyltransferase (156 aa).

S-adenosyl-L-methionine-binding residues include Gly100, Ile122, and Ser130.

Belongs to the class IV-like SAM-binding methyltransferase superfamily. RNA methyltransferase TrmH family. TrmL subfamily. As to quaternary structure, homodimer.

The protein resides in the cytoplasm. The enzyme catalyses cytidine(34) in tRNA + S-adenosyl-L-methionine = 2'-O-methylcytidine(34) in tRNA + S-adenosyl-L-homocysteine + H(+). It carries out the reaction 5-carboxymethylaminomethyluridine(34) in tRNA(Leu) + S-adenosyl-L-methionine = 5-carboxymethylaminomethyl-2'-O-methyluridine(34) in tRNA(Leu) + S-adenosyl-L-homocysteine + H(+). Its function is as follows. Methylates the ribose at the nucleotide 34 wobble position in the two leucyl isoacceptors tRNA(Leu)(CmAA) and tRNA(Leu)(cmnm5UmAA). Catalyzes the methyl transfer from S-adenosyl-L-methionine to the 2'-OH of the wobble nucleotide. The chain is tRNA (cytidine(34)-2'-O)-methyltransferase from Aeromonas hydrophila subsp. hydrophila (strain ATCC 7966 / DSM 30187 / BCRC 13018 / CCUG 14551 / JCM 1027 / KCTC 2358 / NCIMB 9240 / NCTC 8049).